The primary structure comprises 444 residues: Protein cereblon (444 aa).

Residues 1–52 (MAGEGDPEDAAHNMGNHLPLLPAEEEEEDEIEMEVEDQDNKEPKKPNIINFD) form a disordered region. The segment covering 23–37 (AEEEEEDEIEMEVED) has biased composition (acidic residues). Residues 80–321 (CPVIPVLPQV…CELDIMNKCT (242 aa)) form the Lon N-terminal domain. The CULT domain maps to 320 to 428 (CTSLCCKQCQ…LTRSALLPTI (109 aa)). Residues cysteine 325 and cysteine 328 each contribute to the Zn(2+) site. Residues histidine 380, tryptophan 382, and tryptophan 388 each coordinate (S)-thalidomide. Residues cysteine 393 and cysteine 396 each contribute to the Zn(2+) site.

The protein belongs to the CRBN family. Component of a DCX (DDB1-CUL4-X-box) protein ligase complex, at least composed of CRBN, CUL4A, DDB1 and RBX1. Interacts directly with DDB1. Interacts with KCNT1. Interacts with ILF2. Interacts with TRAF6 and ECSIT. In terms of processing, ubiquitinated, ubiquitination is mediated by its own DCX protein ligase complex.

It is found in the cytoplasm. It localises to the nucleus. Its subcellular location is the membrane. It participates in protein modification; protein ubiquitination. In terms of biological role, substrate recognition component of a DCX (DDB1-CUL4-X-box) E3 protein ligase complex that mediates the ubiquitination and subsequent proteasomal degradation of target proteins, such as MEIS2, ILF2 or GLUL. Normal degradation of key regulatory proteins is required for normal limb outgrowth and expression of the fibroblast growth factor FGF8. Maintains presynaptic glutamate release and consequently cognitive functions, such as memory and learning, by negatively regulating large-conductance calcium-activated potassium (BK) channels in excitatory neurons. Likely to function by regulating the assembly and neuronal surface expression of BK channels via its interaction with KCNT1. May also be involved in regulating anxiety-like behaviors via a BK channel-independent mechanism. Plays a negative role in TLR4 signaling by interacting with TRAF6 and ECSIT, leading to inhibition of ECSIT ubiquitination, an important step of the signaling. This Bos taurus (Bovine) protein is Protein cereblon (CRBN).